A 342-amino-acid polypeptide reads, in one-letter code: UDP-N-acetylglucosamine--N-acetylmuramyl-(pentapeptide) pyrophosphoryl-undecaprenol N-acetylglucosamine transferase (342 aa).

Residues 10–12, N124, S177, and Q275 contribute to the UDP-N-acetyl-alpha-D-glucosamine site; that span reads TGG.

The protein belongs to the glycosyltransferase 28 family. MurG subfamily.

It is found in the cell inner membrane. The catalysed reaction is di-trans,octa-cis-undecaprenyl diphospho-N-acetyl-alpha-D-muramoyl-L-alanyl-D-glutamyl-meso-2,6-diaminopimeloyl-D-alanyl-D-alanine + UDP-N-acetyl-alpha-D-glucosamine = di-trans,octa-cis-undecaprenyl diphospho-[N-acetyl-alpha-D-glucosaminyl-(1-&gt;4)]-N-acetyl-alpha-D-muramoyl-L-alanyl-D-glutamyl-meso-2,6-diaminopimeloyl-D-alanyl-D-alanine + UDP + H(+). The protein operates within cell wall biogenesis; peptidoglycan biosynthesis. In terms of biological role, cell wall formation. Catalyzes the transfer of a GlcNAc subunit on undecaprenyl-pyrophosphoryl-MurNAc-pentapeptide (lipid intermediate I) to form undecaprenyl-pyrophosphoryl-MurNAc-(pentapeptide)GlcNAc (lipid intermediate II). The polypeptide is UDP-N-acetylglucosamine--N-acetylmuramyl-(pentapeptide) pyrophosphoryl-undecaprenol N-acetylglucosamine transferase (Campylobacter jejuni subsp. jejuni serotype O:2 (strain ATCC 700819 / NCTC 11168)).